Here is a 274-residue protein sequence, read N- to C-terminus: NAD(P)H dehydrogenase [quinone] 1 (274 aa).

Residues His12, 18-19 (FN), and Gln67 contribute to the FAD site. Ser82 bears the Phosphoserine mark. Residue 104–107 (LQWF) coordinates FAD. Position 126–128 (126–128 (AYT)) interacts with substrate. Residues 148–151 (TTGG), Tyr156, and Arg201 each bind FAD. An important for apoenzyme conformational stability region spans residues 225-274 (PSSLFDLNFQAGFLMKKEVQDEEKNKKFGLSVGHHLGKSIPTDNQIKARK). Glycyl lysine isopeptide (Lys-Gly) (interchain with G-Cter in SUMO2) cross-links involve residues Lys250 and Lys251.

Belongs to the NAD(P)H dehydrogenase (quinone) family. Homodimer. Interacts with PDLIM4 isoform 2; this interaction stabilizes PDLIM4 isoform 2 in response to oxidative stress and protects it from ubiquitin-independent degradation by the core 20S proteasome. Interacts with TP73 (via SAM domain); this interaction is NADH-dependent, stabilizes TP73 in response to oxidative stress and protects it from ubiquitin-independent degradation by the 20S proteasome. Interacts with TP53; this interaction is NADH-dependent, stabilizes TP53 in response to oxidative stress and protects it from ubiquitin-independent degradation by the 20S proteasome. FAD is required as a cofactor.

The protein resides in the cytoplasm. It is found in the cytosol. It catalyses the reaction a quinone + NADH + H(+) = a quinol + NAD(+). It carries out the reaction a quinone + NADPH + H(+) = a quinol + NADP(+). The catalysed reaction is ubiquinone-10 + NADH + H(+) = ubiquinol-10 + NAD(+). The enzyme catalyses menadione + NADH + H(+) = menadiol + NAD(+). Inhibited by dicoumarol. Flavin-containing quinone reductase that catalyzes two-electron reduction of quinones to hydroquinones using either NADH or NADPH as electron donors. In a ping-pong kinetic mechanism, the electrons are sequentially transferred from NAD(P)H to flavin cofactor and then from reduced flavin to the quinone, bypassing the formation of semiquinone and reactive oxygen species. Regulates cellular redox state primarily through quinone detoxification. Reduces components of plasma membrane redox system such as coenzyme Q and vitamin quinones, producing antioxidant hydroquinone forms. In the process may function as superoxide scavenger to prevent hydroquinone oxidation and facilitate excretion. Alternatively, can activate quinones and their derivatives by generating redox reactive hydroquinones with DNA cross-linking antitumor potential. Acts as a gatekeeper of the core 20S proteasome known to degrade proteins with unstructured regions. Upon oxidative stress, interacts with tumor suppressors TP53 and TP73 in a NADH-dependent way and inhibits their ubiquitin-independent degradation by the 20S proteasome. This Homo sapiens (Human) protein is NAD(P)H dehydrogenase [quinone] 1.